The primary structure comprises 589 residues: Heterogeneous nuclear ribonucleoprotein L (589 aa).

Positions 1–16 are enriched in basic residues; it reads MSRRLLPRAEKRRRRL. The segment at 1–100 is disordered; that stretch reads MSRRLLPRAE…NYDDPHKTPA (100 aa). Residues 17–27 are compositionally biased toward basic and acidic residues; that stretch reads EQRQQPDEQRR. The span at 38-54 shows a compositional bias: gly residues; that stretch reads AGGGGGGGRYYGGGSEG. Position 52 is a phosphoserine (Ser-52). Residues Lys-59 and Lys-62 each participate in a glycyl lysine isopeptide (Lys-Gly) (interchain with G-Cter in SUMO2) cross-link. A compositionally biased stretch (gly residues) spans 69-90; sequence QHGGGGGGGGGAGAAGGGGGGE. The residue at position 101 (Ser-101) is a Phosphoserine. The RRM 1 domain occupies 102 to 176; it reads PVVHIRGLID…HPAFVNYSTS (75 aa). Residue Lys-136 forms a Glycyl lysine isopeptide (Lys-Gly) (interchain with G-Cter in SUMO2) linkage. Residue Ser-185 is modified to Phosphoserine. Residues 193–270 form the RRM 2 domain; the sequence is SVLLFTILNP…CTLKIEYAKP (78 aa). An N6-acetyllysine modification is found at Lys-269. Over residues 284–301 the composition is skewed to polar residues; that stretch reads DYTNPNLSGQGDPGSNPN. The interval 284–378 is disordered; it reads DYTNPNLSGQ…PPPPPEYGPH (95 aa). A phosphoserine mark is found at Ser-291 and Ser-298. Residue Lys-302 forms a Glycyl lysine isopeptide (Lys-Gly) (interchain with G-Cter in SUMO2) linkage. An asymmetric dimethylarginine mark is found at Arg-354 and Arg-358. Residues 364–375 show a composition bias toward pro residues; sequence GHPPPPPPPPEY. Ser-381 is subject to Phosphoserine. 2 RRM domains span residues 382–478 and 495–583; these read PVLM…KDFS and RIQH…LCFS. Ser-544 is subject to Phosphoserine; by CaMK4. Residue Lys-568 forms a Glycyl lysine isopeptide (Lys-Gly) (interchain with G-Cter in SUMO2) linkage.

In terms of assembly, identified in a IGF2BP1-dependent mRNP granule complex containing untranslated mRNAs. Interacts with HNRNPLL. Interacts with APEX1; the interaction is DNA-dependent. Component of a complex with SETD2. Interacts with ELAVL1. Part of a transcription inhibitory ribonucleoprotein complex composed at least of the circular RNA circZNF827, ZNF827 and HNRNPK. Interacts with CHD8 in an RNA-dependent manner. Several isoelectric forms of the L protein are probably the results of post-translational modifications. Post-translationally, phosphorylation at Ser-544 by CaMK4 enhances interaction with a CaMK4-responsive RNA element (CaRRE1), and prevents inclusion of the stress axis-regulated exon (STREX) of the KCNMA1 potassium channel transcripts upon membrane depolarization.

The protein resides in the nucleus. The protein localises to the nucleoplasm. It localises to the cytoplasm. Splicing factor binding to exonic or intronic sites and acting as either an activator or repressor of exon inclusion. Exhibits a binding preference for CA-rich elements. Component of the heterogeneous nuclear ribonucleoprotein (hnRNP) complexes and associated with most nascent transcripts. Associates, together with APEX1, to the negative calcium responsive element (nCaRE) B2 of the APEX2 promoter. As part of a ribonucleoprotein complex composed at least of ZNF827, HNRNPK and the circular RNA circZNF827 that nucleates the complex on chromatin, may negatively regulate the transcription of genes involved in neuronal differentiation. Regulates alternative splicing of a core group of genes involved in neuronal differentiation, likely by mediating H3K36me3-coupled transcription elongation and co-transcriptional RNA processing via interaction with CHD8. The polypeptide is Heterogeneous nuclear ribonucleoprotein L (HNRNPL) (Homo sapiens (Human)).